Consider the following 364-residue polypeptide: Zinc finger protein 474 (364 aa).

A compositionally biased stretch (basic residues) spans 1 to 10 (MERGKKKRIS). Disordered regions lie at residues 1–21 (MERG…HHSK) and 37–60 (SYSS…DTQK). The C2HC/C3H-type 1 zinc finger occupies 93–122 (GFRVCYICGREFGSQSIAIHEPQCLQKWHI). Zn(2+)-binding residues include C97, C100, H112, and C116. Residues 127–147 (LPKHLRRPEPSKPQSLSSSGS) are disordered. The segment covering 138-147 (KPQSLSSSGS) has biased composition (low complexity). 3 consecutive C2HC/C3H-type zinc fingers follow at residues 164-193 (QLLP…KGEG), 220-249 (RTVI…KWKM), and 283-312 (QLVF…HPYG). Zn(2+) contacts are provided by C168, C171, H183, C187, C224, C227, H239, C243, C287, C290, H302, and C306. The tract at residues 187–214 (CKPKGEGPRAPHSNSSDHLTGLKKACSG) is disordered.

Requires Zn(2+) as cofactor.

This Homo sapiens (Human) protein is Zinc finger protein 474 (ZNF474).